Here is a 299-residue protein sequence, read N- to C-terminus: ATP phosphoribosyltransferase (299 aa).

It belongs to the ATP phosphoribosyltransferase family. Long subfamily. As to quaternary structure, equilibrium between an active dimeric form, an inactive hexameric form and higher aggregates. Interconversion between the various forms is largely reversible and is influenced by the natural substrates and inhibitors of the enzyme. Mg(2+) is required as a cofactor.

It localises to the cytoplasm. It catalyses the reaction 1-(5-phospho-beta-D-ribosyl)-ATP + diphosphate = 5-phospho-alpha-D-ribose 1-diphosphate + ATP. It functions in the pathway amino-acid biosynthesis; L-histidine biosynthesis; L-histidine from 5-phospho-alpha-D-ribose 1-diphosphate: step 1/9. Feedback inhibited by histidine. Functionally, catalyzes the condensation of ATP and 5-phosphoribose 1-diphosphate to form N'-(5'-phosphoribosyl)-ATP (PR-ATP). Has a crucial role in the pathway because the rate of histidine biosynthesis seems to be controlled primarily by regulation of HisG enzymatic activity. The sequence is that of ATP phosphoribosyltransferase from Buchnera aphidicola subsp. Schlechtendalia chinensis.